We begin with the raw amino-acid sequence, 446 residues long: C4-dicarboxylate transport protein (446 aa).

9 helical membrane passes run 25–45, 58–78, 93–113, 159–179, 199–219, 236–256, 322–342, 370–390, and 400–420; these read VQVLAAIVAGVLLGHFWPAIG, LVKMIIAPVIFLTVATGIASI, FAYFLFFSTLALIVGLVVANV, ALTEGSILQALFVAILFGLAL, VFFGLVGMLMKFAPIGAFGAM, LLIATFYLTSLFFVIVILGAV, IYMTLAALFIAQAVGVDLSLG, AATLSIVPSVPVAGLALILGI, and LTNFIGNALAAIVVAGWEKGL.

This sequence belongs to the dicarboxylate/amino acid:cation symporter (DAACS) (TC 2.A.23) family.

It localises to the cell inner membrane. Functionally, responsible for the transport of dicarboxylates such as succinate, fumarate, and malate from the periplasm across the membrane. The chain is C4-dicarboxylate transport protein from Sphingopyxis alaskensis (strain DSM 13593 / LMG 18877 / RB2256) (Sphingomonas alaskensis).